Consider the following 1051-residue polypeptide: Leucine zipper protein 1 (1051 aa).

The residue at position 2 (Ala-2) is an N-acetylalanine. A coiled-coil region spans residues 11 to 354; the sequence is ASNRHLRFKL…KLQVKKQKEL (344 aa). 4 disordered regions span residues 247-293, 374-401, 432-554, and 569-601; these read ISST…KDLN, RTKL…HKRE, AAKA…SQVT, and ASSQ…SKAP. A compositionally biased stretch (basic and acidic residues) spans 254-293; it reads KESRRKGSLDYLKQVENETRDKSENEKNRNQEDNKVKDLN. A phosphoserine mark is found at Ser-256, Ser-261, Ser-395, Ser-513, Ser-571, Ser-575, Ser-612, and Ser-660. Positions 569 to 578 are enriched in polar residues; sequence ASSQRASSEG. Residues 675–727 are disordered; that stretch reads VNTTITPEPEPKLQPNSREKVKSRGGTRTPLFENDKNAAVENDSAKSMRSSSN. Thr-680 is subject to Phosphothreonine. Ser-691 bears the Phosphoserine mark. Residues 707–720 show a composition bias toward basic and acidic residues; sequence ENDKNAAVENDSAK. The residue at position 746 (Ser-746) is a Phosphoserine. The span at 789-799 shows a compositional bias: low complexity; that stretch reads VTSKVTSSITI. The interval 789–837 is disordered; it reads VTSKVTSSITIYPSDSSGPRAVPTEAPRERHTSTSNIQVGPPELTSVSN. The segment at 834 to 884 is required for interaction with FLNA; it reads SVSNHISSPLELSIHKHDITLQLTEAERVGDGSPKNRAETVVSRSSILIKP. Ser-906 is modified (phosphoserine). Positions 929–938 are enriched in basic and acidic residues; the sequence is RDLKCSEDPP. Positions 929–1000 are disordered; that stretch reads RDLKCSEDPP…TQSSLTASEV (72 aa). 2 stretches are compositionally biased toward polar residues: residues 946–958 and 989–999; these read EATN…SSTD and RRTQSSLTASE. Thr-957 carries the phosphothreonine modification. Phosphoserine is present on Ser-993.

Component of the CERF-1 ISWI chromatin remodeling complex (also called the CECR2-containing remodeling factor (CERF) complex) at least composed of CECR2 and SMARCA1. Component of the CERF-5 ISWI chromatin remodeling complex at least composed of CECR2 and SMARCA5/SNF2H. LUZP1 is detected as part of the CERF-1 and CERF-5 complexes in embryonic stem (ES) cells where it is involved in complex stabilization but is not detected in the complexes in the testis. Interacts (via C-terminus) with LIMA1/EPLIN; both proteins restrict ciliation and may work together to regulate this process. Interacts with myosin light chain MYL9; the interaction results in inhibition of phosphorylation of MYL9 by DAPK3. Interacts with DAPK3; the interaction is likely to occur throughout the cell cycle and reduces the LUZP1-mediated suppression of MYL9 phosphorylation. Interacts with the chromosomal passenger complex (CPC); CPC kinase activity is required for localization of LUZP1 to the centromere. Expressed in cerebral cortex, cerebellum, hippocampus and brain stem.

It is found in the cytoplasm. The protein localises to the cytoskeleton. Its subcellular location is the microtubule organizing center. The protein resides in the centrosome. It localises to the cilium basal body. It is found in the midbody. The protein localises to the chromosome. Its subcellular location is the centromere. The protein resides in the spindle. It localises to the stress fiber. It is found in the nucleus. The protein localises to the cell projection. Its subcellular location is the dendrite. The protein resides in the perikaryon. It localises to the cell junction. It is found in the tight junction. Its function is as follows. F-actin cross-linking protein. Stabilizes actin and acts as a negative regulator of primary cilium formation. Positively regulates the phosphorylation of both myosin II and protein phosphatase 1 regulatory subunit PPP1R12A/MYPT1 and promotes the assembly of myosin II stacks within actin stress fibers. Inhibits the phosphorylation of myosin light chain MYL9 by DAPK3 and suppresses the constriction velocity of the contractile ring during cytokinesis. Binds to microtubules and promotes epithelial cell apical constriction by up-regulating levels of diphosphorylated myosin light chain (MLC) through microtubule-dependent inhibition of MLC dephosphorylation by myosin phosphatase. Involved in regulation of cell migration, nuclear size and centriole number, probably through regulation of the actin cytoskeleton. Component of the CERF-1 and CERF-5 chromatin remodeling complexes in embryonic stem cells where it acts to stabilize the complexes. Plays a role in embryonic brain and cardiovascular development. In Rattus norvegicus (Rat), this protein is Leucine zipper protein 1 (Luzp1).